The following is a 212-amino-acid chain: Actin-depolymerizing factor 1, isoforms a/b (212 aa).

The ADF-H domain maps to 3 to 159 (SGVMVDPDVQ…SHKELLNNCP (157 aa)).

Belongs to the actin-binding proteins ADF family. In terms of assembly, interacts with F-actin.

Its function is as follows. Depolymerizes growing actin filaments in muscle cells; required for the assembly of actin filaments into the functional contractile myofilament lattice of muscle. Competes with unc-87 for actin binding and inhibits the actin-bundling activity of unc-87. The polypeptide is Actin-depolymerizing factor 1, isoforms a/b (Caenorhabditis elegans).